Reading from the N-terminus, the 131-residue chain is Histone H2A.2 (131 aa).

Residues 1-22 (MSGGKGKAGSSEKASTSRSAKA) form a disordered region. Serine 2 carries the post-translational modification N-acetylserine. N6-acetyllysine is present on residues lysine 5 and lysine 7. Glutamine 105 is modified (N5-methylglutamine). Serine 128 bears the Phosphoserine mark. The [ST]-Q motif motif lies at 128–129 (SQ).

Belongs to the histone H2A family. The nucleosome is a histone octamer containing two molecules each of H2A, H2B, H3 and H4 assembled in one H3-H4 heterotetramer and two H2A-H2B heterodimers. The octamer wraps approximately 147 bp of DNA. In terms of processing, phosphorylated to form H2AS128ph (gamma-H2A) in response to DNA double-strand breaks (DSBs) generated by exogenous genotoxic agents and by stalled replication forks. Phosphorylation is dependent on the DNA damage checkpoint kinases MEC1/ATR and TEL1/ATM, spreads on either side of a detected DSB site and may mark the surrounding chromatin for recruitment of proteins required for DNA damage signaling and repair. Gamma-H2A is removed from the DNA prior to the strand invasion-primer extension step of the repair process and subsequently dephosphorylated. Dephosphorylation is necessary for efficient recovery from the DNA damage checkpoint. Acetylated by ESA1 to form H2AK4ac and H2AK7ac.

The protein localises to the nucleus. Its subcellular location is the chromosome. In terms of biological role, core component of nucleosome which plays a central role in DNA double strand break (DSB) repair. Nucleosomes wrap and compact DNA into chromatin, limiting DNA accessibility to the cellular machineries which require DNA as a template. Histones thereby play a central role in transcription regulation, DNA repair, DNA replication and chromosomal stability. DNA accessibility is regulated via a complex set of post-translational modifications of histones, also called histone code, and nucleosome remodeling. The protein is Histone H2A.2 (HTA2) of Debaryomyces hansenii (strain ATCC 36239 / CBS 767 / BCRC 21394 / JCM 1990 / NBRC 0083 / IGC 2968) (Yeast).